The chain runs to 76 residues: Large ribosomal subunit protein bL31 (76 aa).

Residues C16, C18, C36, and C39 each contribute to the Zn(2+) site.

This sequence belongs to the bacterial ribosomal protein bL31 family. Type A subfamily. In terms of assembly, part of the 50S ribosomal subunit. Zn(2+) is required as a cofactor.

Binds the 23S rRNA. The protein is Large ribosomal subunit protein bL31 of Syntrophobacter fumaroxidans (strain DSM 10017 / MPOB).